The sequence spans 852 residues: Protein SEY1 (852 aa).

The Cytoplasmic portion of the chain corresponds to 1 to 738 (MNGHFAAVGN…KRSAIGGITQ (738 aa)). The 237-residue stretch at 47 to 283 (GFNYHLISVF…FVGGVFLPEY (237 aa)) folds into the GB1/RHD3-type G domain. Residue 57 to 64 (GSQSTGKS) participates in GTP binding. The stretch at 475 to 500 (QYRLFEKELDEVSARLRKEEMRRLAI) forms a coiled coil. Residues 739-759 (VPLYFYIVLLIFGWNEIVMVL) form a helical membrane-spanning segment. At 760–762 (RNP) the chain is on the lumenal side. Residues 763–783 (MLFMLLLVMGGGTYVAYTLNL) traverse the membrane as a helical segment. Topologically, residues 784–852 (LGPMMQMANA…AQEVEEDDDI (69 aa)) are cytoplasmic. Positions 825-852 (RSQDNGIGMDRLDSRGKKAQEVEEDDDI) are disordered. Positions 834 to 845 (DRLDSRGKKAQE) are enriched in basic and acidic residues.

It belongs to the TRAFAC class dynamin-like GTPase superfamily. GB1/RHD3 GTPase family. RHD3 subfamily.

The protein localises to the endoplasmic reticulum membrane. Cooperates with the reticulon proteins and tubule-shaping DP1 family proteins to generate and maintain the structure of the tubular endoplasmic reticulum network. Has GTPase activity, which is required for its function in ER organization. This Chaetomium globosum (strain ATCC 6205 / CBS 148.51 / DSM 1962 / NBRC 6347 / NRRL 1970) (Soil fungus) protein is Protein SEY1.